The chain runs to 44 residues: Endochitinase 1 (44 aa).

This sequence belongs to the glycosyl hydrolase 19 family. Chitinase class I subfamily.

The enzyme catalyses Random endo-hydrolysis of N-acetyl-beta-D-glucosaminide (1-&gt;4)-beta-linkages in chitin and chitodextrins.. Functionally, defense against chitin-containing fungal pathogens. This chain is Endochitinase 1, found in Capsicum chinense (Scotch bonnet).